Consider the following 341-residue polypeptide: 5-formaminoimidazole-4-carboxamide-1-(beta)-D-ribofuranosyl 5'-monophosphate synthetase (341 aa).

2 residues coordinate 5-amino-1-(5-phospho-beta-D-ribosyl)imidazole-4-carboxamide: His10 and Thr77. The ATP-grasp domain occupies 106–317 (DREMKEKLMR…YYNLLFNETM (212 aa)). ATP is bound by residues 132 to 188 (EKLS…VLAY) and Glu210. Asn238 contributes to the 5-amino-1-(5-phospho-beta-D-ribosyl)imidazole-4-carboxamide binding site. Mg(2+) contacts are provided by Glu277 and Glu290.

It belongs to the phosphohexose mutase family. It depends on Mg(2+) as a cofactor. Mn(2+) serves as cofactor.

It catalyses the reaction 5-amino-1-(5-phospho-beta-D-ribosyl)imidazole-4-carboxamide + formate + ATP = 5-formamido-1-(5-phospho-D-ribosyl)imidazole-4-carboxamide + ADP + phosphate. It functions in the pathway purine metabolism; IMP biosynthesis via de novo pathway; 5-formamido-1-(5-phospho-D-ribosyl)imidazole-4-carboxamide from 5-amino-1-(5-phospho-D-ribosyl)imidazole-4-carboxamide (formate route): step 1/1. Catalyzes the ATP- and formate-dependent formylation of 5-aminoimidazole-4-carboxamide-1-beta-d-ribofuranosyl 5'-monophosphate (AICAR) to 5-formaminoimidazole-4-carboxamide-1-beta-d-ribofuranosyl 5'-monophosphate (FAICAR) in the absence of folates. The polypeptide is 5-formaminoimidazole-4-carboxamide-1-(beta)-D-ribofuranosyl 5'-monophosphate synthetase (Nitrosopumilus maritimus (strain SCM1)).